The primary structure comprises 82 residues: Myosin light chain alkali (82 aa).

The EF-hand domain occupies 7-42 (GCYGDFIECLKLYDKEENGTMMLAELQHALLALGES).

In terms of assembly, myosin is a hexamer of 2 heavy chains and 4 light chains.

This Drosophila sechellia (Fruit fly) protein is Myosin light chain alkali (Mlc1).